Reading from the N-terminus, the 308-residue chain is 50 kDa gamma-zein (308 aa).

The N-terminal stretch at 1 to 19 is a signal peptide; that stretch reads MKLVLVVLAFIALVSSVSC. Positions 27–159 are disordered; it reads CGQQQSHEQQ…QPQQPQQYQQ (133 aa). Positions 55-119 are enriched in low complexity; it reads HHQQQQHQQQ…QHHQQSQGHV (65 aa). Positions 120–129 are enriched in basic and acidic residues; sequence QQHEQSHEQH. Low complexity predominate over residues 130–159; that stretch reads QGQSHEQQHQQQFQGHDKQQQPQQPQQYQQ. Cys-286 carries GPI-anchor amidated cysteine lipidation. A propeptide spans 287–308 (removed in mature form); it reads GLYHSYYQNNPCSSNDISGVCN.

Belongs to the gliadin/glutenin family. Interacts with OP10 (via N-terminus).

Its subcellular location is the cell membrane. Zeins are major seed storage proteins. The protein is 50 kDa gamma-zein of Zea mays (Maize).